Here is a 197-residue protein sequence, read N- to C-terminus: Holliday junction branch migration complex subunit RuvA (197 aa).

Residues 1–64 (MIASVRGTLI…EDALTLYGFK (64 aa)) form a domain I region. The domain II stretch occupies residues 65-145 (TVEQRQLFET…GLPVAPGVSP (81 aa)). The segment at 146–153 (AVAAVNAE) is flexible linker. The interval 153–197 (ELSEMLVSLGFSSAEASTAIAALPPDAPLDLEERLRLALRYFGAR) is domain III.

The protein belongs to the RuvA family. Homotetramer. Forms an RuvA(8)-RuvB(12)-Holliday junction (HJ) complex. HJ DNA is sandwiched between 2 RuvA tetramers; dsDNA enters through RuvA and exits via RuvB. An RuvB hexamer assembles on each DNA strand where it exits the tetramer. Each RuvB hexamer is contacted by two RuvA subunits (via domain III) on 2 adjacent RuvB subunits; this complex drives branch migration. In the full resolvosome a probable DNA-RuvA(4)-RuvB(12)-RuvC(2) complex forms which resolves the HJ.

Its subcellular location is the cytoplasm. Functionally, the RuvA-RuvB-RuvC complex processes Holliday junction (HJ) DNA during genetic recombination and DNA repair, while the RuvA-RuvB complex plays an important role in the rescue of blocked DNA replication forks via replication fork reversal (RFR). RuvA specifically binds to HJ cruciform DNA, conferring on it an open structure. The RuvB hexamer acts as an ATP-dependent pump, pulling dsDNA into and through the RuvAB complex. HJ branch migration allows RuvC to scan DNA until it finds its consensus sequence, where it cleaves and resolves the cruciform DNA. This Roseiflexus castenholzii (strain DSM 13941 / HLO8) protein is Holliday junction branch migration complex subunit RuvA.